The following is a 124-amino-acid chain: Small ribosomal subunit protein uS12 (124 aa).

Aspartate 89 carries the 3-methylthioaspartic acid modification. The segment at 105–124 (AGVKDRRQSRSKYGAKRPKA) is disordered. Basic residues predominate over residues 113 to 124 (SRSKYGAKRPKA).

This sequence belongs to the universal ribosomal protein uS12 family. As to quaternary structure, part of the 30S ribosomal subunit. Contacts proteins S8 and S17. May interact with IF1 in the 30S initiation complex.

With S4 and S5 plays an important role in translational accuracy. In terms of biological role, interacts with and stabilizes bases of the 16S rRNA that are involved in tRNA selection in the A site and with the mRNA backbone. Located at the interface of the 30S and 50S subunits, it traverses the body of the 30S subunit contacting proteins on the other side and probably holding the rRNA structure together. The combined cluster of proteins S8, S12 and S17 appears to hold together the shoulder and platform of the 30S subunit. The chain is Small ribosomal subunit protein uS12 (rpsL) from Synechococcus elongatus (strain ATCC 33912 / PCC 7942 / FACHB-805) (Anacystis nidulans R2).